Consider the following 1211-residue polypeptide: Endoplasmic reticulum transmembrane helix translocase (1211 aa).

The Cytoplasmic segment spans residues 1-23 (MGSKALITSPDISSGQLYIKLPT). Residues 24-44 (FFHLYVWPFALFVYPYIGYVY) form a helical membrane-spanning segment. Over 45–54 (QNKLYSEEVR) the chain is Lumenal. A helical membrane pass occupies residues 55-75 (YLTYIAVGTIHALFWLAGEWN). The Cytoplasmic segment spans residues 76–191 (TKVYCLMTCR…FDIPIPTFGT (116 aa)). The A-domain; part 1 stretch occupies residues 155 to 185 (TIGTLKKSTGLTNIQSEIFLYRYGKNCFDIP). Residues 192–212 (LFKEHAVAPFFVFQIFCCVLW) traverse the membrane as a helical segment. Residues 213–216 (CLDD) are Lumenal-facing. The chain crosses the membrane as a helical span at residues 217–237 (YWYFSLFSMFMIIALECSVVW). The Cytoplasmic segment spans residues 238 to 397 (QRQRTLTEFR…EKVTANNRES (160 aa)). An A-domain; part 2 region spans residues 250-388 (SIKPYEIQVY…LVRTMVFSSE (139 aa)). The chain crosses the membrane as a helical span at residues 398–418 (LYFILFLLVFAIAASGYVWHV). The Lumenal portion of the chain corresponds to 419–1057 (GSKTERSRYK…KERPQAGIFN (639 aa)). The P-domain; part 1 stretch occupies residues 464–493 (YIYCTEPFRIPLSGHLDICCFDKTGTLTEE). The active-site 4-aspartylphosphate intermediate is the aspartate 485. Residues aspartate 485 and threonine 487 each contribute to the Mg(2+) site. Residues 485 to 487 (DKT), phenylalanine 587, arginine 644, aspartate 710, and 824 to 828 (DGTND) each bind ATP. Residues 495–685 (MVVQGIAGVN…FAGFLIFTSP (191 aa)) are N-domain. The P-domain; part 2 stretch occupies residues 688 to 845 (EDARQTVQML…HVGVALLNAS (158 aa)). Residue aspartate 824 participates in Mg(2+) binding. Residues 846 to 955 (EEDMLEMQER…NASDDEAPKL (110 aa)) form an arm-like region. Positions 956-971 (KLGDASVAAPFTSKLA) are P-domain; part 3. A helical transmembrane segment spans residues 1058 to 1078 (TYIIGSVLGQFAIHIVTLIYI). Residues 1079 to 1100 (TRVVYLYEDPLEKVDLEETFKP) are Cytoplasmic-facing. Residues 1101 to 1121 (SLLNTAIYLLQLIQQVSTFAI) traverse the membrane as a helical segment. Residues 1122–1136 (NYQGRPFREALSENK) are Lumenal-facing. A helical transmembrane segment spans residues 1137–1157 (GMYYGLLGIAFVAIAGVTEFS). At 1158–1174 (PELNAKLQLVKMAYNFQ) the chain is on the cytoplasmic side. A helical membrane pass occupies residues 1175–1195 (IQLLATMVVDYAACWIIEELM). At 1196–1211 (KKYFRDNKPKEIVLRN) the chain is on the lumenal side.

It belongs to the cation transport ATPase (P-type) (TC 3.A.3) family. Type V subfamily. Requires Mg(2+) as cofactor.

It localises to the endoplasmic reticulum membrane. The catalysed reaction is [protein]-with a C-terminal TM segment(out) + ATP + H2O = [protein]-with a C-terminal TM segment(in) + ADP + phosphate + H(+). In terms of biological role, endoplasmic reticulum translocase required to remove mitochondrial transmembrane proteins mistargeted to the endoplasmic reticulum. Acts as a dislocase that mediates the ATP-dependent extraction of mislocalized mitochondrial transmembrane proteins from the endoplasmic reticulum membrane. Specifically binds mitochondrial tail-anchored transmembrane proteins: has an atypically large substrate-binding pocket that recognizes and binds moderately hydrophobic transmembranes with short hydrophilic lumenal domains. Involved in controlling nuclear calcium ion levels. Required for cytokinesis and stabilizing microtubules. Required for assembly of the forespore membrane. Involved in calcium transport to the endoplasmic reticulum. The protein is Endoplasmic reticulum transmembrane helix translocase of Schizosaccharomyces pombe (strain 972 / ATCC 24843) (Fission yeast).